Consider the following 774-residue polypeptide: Subtilisin-like protease SBT3.5 (774 aa).

The signal sequence occupies residues 1-23 (MRNCRVLLVLVLSLVIVLNVVRA). The propeptide at 24-108 (SDESKVHIVY…VMADSFYELA (85 aa)) is removed in mature form. The region spanning 29 to 108 (VHIVYLGEKQ…VMADSFYELA (80 aa)) is the Inhibitor I9 domain. Residues 112–621 (TWDYLGLSVA…GGIVNPEKAA (510 aa)) form the Peptidase S8 domain. An N-linked (GlcNAc...) asparagine glycan is attached at Asn-128. Catalysis depends on Asp-142, which acts as the Charge relay system. Asn-201 is a glycosylation site (N-linked (GlcNAc...) asparagine). His-217 functions as the Charge relay system in the catalytic mechanism. 4 N-linked (GlcNAc...) asparagine glycosylation sites follow: Asn-232, Asn-394, Asn-409, and Asn-539. The PA domain occupies 383 to 478 (SLVYPENAGF…ELGTDVLLYI (96 aa)). The active-site Charge relay system is Ser-552. N-linked (GlcNAc...) asparagine glycosylation is found at Asn-644, Asn-654, Asn-725, and Asn-755.

It belongs to the peptidase S8 family. In terms of tissue distribution, expressed in roots, leaves, stems, flower buds, developing siliques and mature seeds.

The protein localises to the secreted. It is found in the cell wall. Functionally, serine protease that cleaves the pectin methylesterase 17 (PME17) protein to release the PME17 mature form in the apoplasm. This Arabidopsis thaliana (Mouse-ear cress) protein is Subtilisin-like protease SBT3.5.